Consider the following 559-residue polypeptide: MEKSTMSVILFVLHLLVLHLQYSEVHSLANTSAHDFSYLKFVYNATDTSLEGSYDYIVIGGGTSGCPLAATLSEKYKVLLLERGTIATEYPNTLTADGFAYNLQQQDDGKTPVERFVSEDGIDNVRARILGGTTIINAGVYARANISFYSQTGIEWDLDLVNKTYEWVEDAIVVKPNNQSWQSVIGEGFLEAGILPDNGFSLDHEAGTRLTGSTFDNNGTRHAADELLNKGDPNNLLVAVQASVEKILFSSNTSNLSAIGVIYTDSDGNSHQAFVRGNGEVIVSAGTIGTPQLLLLSGVGPESYLSSLNITVVQPNPYVGQFLYNNPRNFINNFPPNPIEASVVTVLGIRSDYYQVSLSSLPFSTPPFSLFPTTSYPLPNSTFAHIVSQVPGPLSHGSVTLNSSSDVRIAPNIKFNYYSNSTDLANCVSGMKKLGDLLRTKALEPYKARDVLGIDGFNYLGVPLPENQTDDASFETFCLDNVASYWHYHGGSLVGKVLDDSFRVMGIKALRVVDASTFPYEPNSHPQGFYLMLGRYVGLQILQERSIRLEAIHNIQESM.

A signal peptide spans 1–27 (MEKSTMSVILFVLHLLVLHLQYSEVHS). N-linked (GlcNAc...) asparagine glycosylation is found at Asn-30 and Asn-44. FAD contacts are provided by residues 63–64 (TS), 82–83 (ER), Thr-133, and 137–140 (NAGV). 4 N-linked (GlcNAc...) asparagine glycosylation sites follow: Asn-145, Asn-162, Asn-178, and Asn-218. Val-244 contributes to the FAD binding site. N-linked (GlcNAc...) asparagine glycosylation is found at Asn-252, Asn-255, Asn-309, Asn-380, Asn-402, Asn-420, and Asn-467. An intrachain disulfide couples Cys-427 to Cys-478. Tyr-485 is a binding site for substrate. 486–487 (WH) contacts FAD. Residue His-487 is the Proton donor of the active site. His-525 serves as the catalytic Proton acceptor. 526 to 527 (PQ) is a binding site for FAD.

The protein belongs to the GMC oxidoreductase family. In terms of assembly, monomer. It depends on FAD as a cofactor.

It catalyses the reaction (R)-mandelonitrile = benzaldehyde + hydrogen cyanide. Functionally, involved in cyanogenesis, the release of HCN from injured tissues. Catalyzes the stereospecific addition of HCN to a variety of aldehydes in vitro. It is a major seed constituent, and could have the additional role of a storage form for reduced nitrogen. The chain is (R)-mandelonitrile lyase 1 (MDL1) from Prunus dulcis (Almond).